We begin with the raw amino-acid sequence, 415 residues long: Stimulator of interferon genes protein (415 aa).

The 135-residue stretch at 29-163 folds into the TIR domain; sequence HVYHAFISYC…DIIQAISKPE (135 aa). The active site involves E104. R256 is a 2',3'-cGAMP binding site. A disordered region spans residues 387-415; that stretch reads KSPSSTNMVKSEPNIYREESGKTKSVERG. Over residues 401 to 415 the composition is skewed to basic and acidic residues; that stretch reads IYREESGKTKSVERG.

This sequence in the N-terminal section; belongs to the Toll-like receptor family. It in the C-terminal section; belongs to the TMEM173 family. In terms of assembly, homodimer.

The catalysed reaction is NAD(+) + H2O = ADP-D-ribose + nicotinamide + H(+). In terms of biological role, sensor of cytosolic DNA from bacteria and viruses that promotes autophagy. Binds c-di-AMP, 2'3'-cGAMP, 3'3'-cGAMP and to a lesser extent c-di-GMP. Nucleotide binding has not been seen to stimulate NAD(+) hydrolase activity. In Magallana gigas (Pacific oyster), this protein is Stimulator of interferon genes protein.